Consider the following 332-residue polypeptide: L-lactate dehydrogenase A chain (332 aa).

The residue at position 2 (alanine 2) is an N-acetylalanine. Residue lysine 5 is modified to N6-acetyllysine; alternate. N6-succinyllysine; alternate is present on lysine 5. Lysine 14 is subject to N6-acetyllysine. Residue 29–57 (GAVGMACAISILMKDLADELALVDVMEDK) coordinates NAD(+). Lysine 57 bears the N6-acetyllysine; alternate mark. Lysine 57 participates in a covalent cross-link: Glycyl lysine isopeptide (Lys-Gly) (interchain with G-Cter in SUMO2); alternate. N6-acetyllysine is present on lysine 81. Arginine 99 is a binding site for NAD(+). Substrate is bound at residue arginine 106. Lysine 118 is modified (N6-acetyllysine; alternate). Lysine 118 is subject to N6-succinyllysine; alternate. Lysine 126 carries the post-translational modification N6-acetyllysine. Residue asparagine 138 participates in NAD(+) binding. Substrate-binding residues include asparagine 138 and arginine 169. The active-site Proton acceptor is histidine 193. N6-acetyllysine occurs at positions 224 and 232. Tyrosine 239 bears the Phosphotyrosine mark. Lysine 243 carries the post-translational modification N6-acetyllysine. Threonine 248 lines the substrate pocket. Threonine 309 is subject to Phosphothreonine. Position 318 is an N6-acetyllysine; alternate (lysine 318). Lysine 318 is modified (N6-succinyllysine; alternate). Threonine 322 is modified (phosphothreonine).

Belongs to the LDH/MDH superfamily. LDH family. In terms of assembly, homotetramer. Interacts with PTEN upstream reading frame protein MP31. Post-translationally, ISGylated.

The protein localises to the cytoplasm. It catalyses the reaction (S)-lactate + NAD(+) = pyruvate + NADH + H(+). Its pathway is fermentation; pyruvate fermentation to lactate; (S)-lactate from pyruvate: step 1/1. Interconverts simultaneously and stereospecifically pyruvate and lactate with concomitant interconversion of NADH and NAD(+). The protein is L-lactate dehydrogenase A chain (Ldha) of Mus musculus (Mouse).